A 416-amino-acid chain; its full sequence is MDLTNMGIAAKDAAFHLATASTAQKNKALAIIADELEANAATILEANAKDIELGREAGLTDALLDRLLLNEERLTGIANDVRNVISLNDPVGSEIDSKALENGMSLSRRRVPLGVVGVIYEARPNVTIDIAALCLKTGNASILRGGKETFFSNMELVKVIQSALEKAELPAASVQYIEKPDRELVSQLLKLDDYVDMIIPRGGAGLHKMCKENSTIPVIIGGFGISHIFVDESADLEKSVDVVENSKVQRPSACNSLDTLLVHEAVAEAFLAKLTQRLAGKVTLVADARAKSLLAGFEDQRDAVEGDFDTEWLSYTLGVKVVADVAEAIDHMRVHNASHSDAIMTNSLESSERFINSVGSAAVYVNASTRFTDGAQFGLGAEVAVSTQKLHARGPMGLEELTSYKWVGKANYLVRG.

This sequence belongs to the gamma-glutamyl phosphate reductase family.

The protein resides in the cytoplasm. It carries out the reaction L-glutamate 5-semialdehyde + phosphate + NADP(+) = L-glutamyl 5-phosphate + NADPH + H(+). It participates in amino-acid biosynthesis; L-proline biosynthesis; L-glutamate 5-semialdehyde from L-glutamate: step 2/2. Functionally, catalyzes the NADPH-dependent reduction of L-glutamate 5-phosphate into L-glutamate 5-semialdehyde and phosphate. The product spontaneously undergoes cyclization to form 1-pyrroline-5-carboxylate. The sequence is that of Gamma-glutamyl phosphate reductase from Vibrio atlanticus (strain LGP32) (Vibrio splendidus (strain Mel32)).